A 177-amino-acid polypeptide reads, in one-letter code: O-acetyl-ADP-ribose deacetylase (177 aa).

The region spanning 1–175 is the Macro domain; sequence MNSRIHVIHG…LYQRLLTQQG (175 aa). Substrate is bound by residues 11–12, Asn-25, 33–35, and 122–126; these read DI, GVD, and STGVY. Asp-35 (proton acceptor) is an active-site residue.

The protein belongs to the MacroD-type family. YmdB subfamily. Homodimer. Interacts with RNase III.

It carries out the reaction 3''-O-acetyl-ADP-D-ribose + H2O = ADP-D-ribose + acetate + H(+). The catalysed reaction is 2''-O-acetyl-ADP-D-ribose + H2O = ADP-D-ribose + acetate + H(+). Its function is as follows. Deacetylates O-acetyl-ADP ribose to yield ADP-ribose and free acetate. Down-regulates ribonuclease 3 (RNase III) activity. Acts by interacting directly with the region of the ribonuclease that is required for dimerization/activation. This chain is O-acetyl-ADP-ribose deacetylase, found in Citrobacter rodentium (strain ICC168) (Citrobacter freundii biotype 4280).